The following is a 104-amino-acid chain: N(4)-acetylcytidine amidohydrolase (104 aa).

An ASCH domain is found at 7–104 (TFFTRFEQDI…FWVIAFELVD (98 aa)). Lys21 acts as the Proton acceptor in catalysis. Thr24 acts as the Nucleophile in catalysis. Catalysis depends on Glu74, which acts as the Proton donor.

Belongs to the N(4)-acetylcytidine amidohydrolase family.

It catalyses the reaction N(4)-acetylcytidine + H2O = cytidine + acetate + H(+). The enzyme catalyses N(4)-acetyl-2'-deoxycytidine + H2O = 2'-deoxycytidine + acetate + H(+). It carries out the reaction N(4)-acetylcytosine + H2O = cytosine + acetate + H(+). Catalyzes the hydrolysis of N(4)-acetylcytidine (ac4C). This Pasteurella multocida (strain Pm70) protein is N(4)-acetylcytidine amidohydrolase.